The sequence spans 450 residues: Folate synthesis bifunctional protein (450 aa).

The interval 1-166 is HPPK; sequence MTTWNFVCLG…TFAELAAIYP (166 aa). Residues 180-441 form the Pterin-binding domain; the sequence is TQIMGIVNVT…QVEGNRRVLA (262 aa). The segment at 182-450 is DHPS; sequence IMGIVNVTDD…AAAAWSGMPV (269 aa). Asparagine 187 is a binding site for Mg(2+). Residues threonine 227, aspartate 267, asparagine 287, aspartate 358, lysine 395, and 429-431 contribute to the (7,8-dihydropterin-6-yl)methyl diphosphate site; that span reads RVH.

The protein in the C-terminal section; belongs to the DHPS family. In the N-terminal section; belongs to the HPPK family. The cofactor is Mg(2+).

It carries out the reaction 6-hydroxymethyl-7,8-dihydropterin + ATP = (7,8-dihydropterin-6-yl)methyl diphosphate + AMP + H(+). The catalysed reaction is (7,8-dihydropterin-6-yl)methyl diphosphate + 4-aminobenzoate = 7,8-dihydropteroate + diphosphate. Its pathway is cofactor biosynthesis; tetrahydrofolate biosynthesis; 2-amino-4-hydroxy-6-hydroxymethyl-7,8-dihydropteridine diphosphate from 7,8-dihydroneopterin triphosphate: step 4/4. It functions in the pathway cofactor biosynthesis; tetrahydrofolate biosynthesis; 7,8-dihydrofolate from 2-amino-4-hydroxy-6-hydroxymethyl-7,8-dihydropteridine diphosphate and 4-aminobenzoate: step 1/2. The polypeptide is Folate synthesis bifunctional protein (folKP) (Chlamydia muridarum (strain MoPn / Nigg)).